A 215-amino-acid chain; its full sequence is MKTEVKICGLKTAEALQRAVALGASHTGFIFFPKSPRNIEPDDAGRLAELARGRAKIVAVTVDADNDDLDEIVSALHPEVLQLHGSENPERVLAIKALYGLPVIKALPIREASDLERIAPYIGIADRFLLDAKPPAGSDLPGGNGVSFDWRLLDALDANVDYMLSGGLNASNVEDALALTGARAIDTSSGVESAPGIKDLTLMDAFFEAIRRAEA.

Belongs to the TrpF family.

The enzyme catalyses N-(5-phospho-beta-D-ribosyl)anthranilate = 1-(2-carboxyphenylamino)-1-deoxy-D-ribulose 5-phosphate. Its pathway is amino-acid biosynthesis; L-tryptophan biosynthesis; L-tryptophan from chorismate: step 3/5. The polypeptide is N-(5'-phosphoribosyl)anthranilate isomerase (Sinorhizobium medicae (strain WSM419) (Ensifer medicae)).